A 201-amino-acid polypeptide reads, in one-letter code: uncharacterized protein (201 aa).

One can recognise a Bro-N domain in the interval 15 to 122 (KNQIQFSTFN…EVLPQIRKTG (108 aa)).

This is an uncharacterized protein from Haemophilus influenzae (strain ATCC 51907 / DSM 11121 / KW20 / Rd).